Reading from the N-terminus, the 237-residue chain is Phosphoribosylaminoimidazole-succinocarboxamide synthase (237 aa).

This sequence belongs to the SAICAR synthetase family.

It carries out the reaction 5-amino-1-(5-phospho-D-ribosyl)imidazole-4-carboxylate + L-aspartate + ATP = (2S)-2-[5-amino-1-(5-phospho-beta-D-ribosyl)imidazole-4-carboxamido]succinate + ADP + phosphate + 2 H(+). The protein operates within purine metabolism; IMP biosynthesis via de novo pathway; 5-amino-1-(5-phospho-D-ribosyl)imidazole-4-carboxamide from 5-amino-1-(5-phospho-D-ribosyl)imidazole-4-carboxylate: step 1/2. This chain is Phosphoribosylaminoimidazole-succinocarboxamide synthase, found in Photorhabdus laumondii subsp. laumondii (strain DSM 15139 / CIP 105565 / TT01) (Photorhabdus luminescens subsp. laumondii).